Consider the following 1025-residue polypeptide: Exportin-T (1025 aa).

The protein belongs to the exportin family.

The protein resides in the nucleus. The protein localises to the cytoplasm. Functionally, tRNA nucleus export receptor which facilitates tRNA translocation across the nuclear pore complex. Involved in pre-tRNA splicing, probably by affecting the interaction of pre-tRNA with splicing endonuclease. The sequence is that of Exportin-T (LOS1) from Yarrowia lipolytica (strain CLIB 122 / E 150) (Yeast).